Reading from the N-terminus, the 211-residue chain is Arginine exporter protein ArgO (211 aa).

6 consecutive transmembrane segments (helical) span residues Met-1–Pro-21, Leu-37–Gly-57, Leu-68–Leu-88, Ile-111–Val-131, Trp-147–Ala-167, and Ala-179–Ala-199.

The protein belongs to the LysE/ArgO transporter (TC 2.A.75) family.

It is found in the cell inner membrane. The enzyme catalyses L-arginine(in) = L-arginine(out). In terms of biological role, involved in the export of arginine. Important to control the intracellular level of arginine and the correct balance between arginine and lysine. The sequence is that of Arginine exporter protein ArgO from Salmonella choleraesuis (strain SC-B67).